The primary structure comprises 331 residues: Biotin synthase (331 aa).

A Radical SAM core domain is found at 46 to 275 (YYGKKVKLNM…TKEIRISGGR (230 aa)). Residues cysteine 64, cysteine 68, and cysteine 71 each coordinate [4Fe-4S] cluster. [2Fe-2S] cluster-binding residues include cysteine 108, cysteine 140, cysteine 200, and arginine 270.

This sequence belongs to the radical SAM superfamily. Biotin synthase family. As to quaternary structure, homodimer. It depends on [4Fe-4S] cluster as a cofactor. The cofactor is [2Fe-2S] cluster.

It catalyses the reaction (4R,5S)-dethiobiotin + (sulfur carrier)-SH + 2 reduced [2Fe-2S]-[ferredoxin] + 2 S-adenosyl-L-methionine = (sulfur carrier)-H + biotin + 2 5'-deoxyadenosine + 2 L-methionine + 2 oxidized [2Fe-2S]-[ferredoxin]. It participates in cofactor biosynthesis; biotin biosynthesis; biotin from 7,8-diaminononanoate: step 2/2. Its function is as follows. Catalyzes the conversion of dethiobiotin (DTB) to biotin by the insertion of a sulfur atom into dethiobiotin via a radical-based mechanism. The protein is Biotin synthase of Lysinibacillus sphaericus (strain C3-41).